Consider the following 187-residue polypeptide: 2-oxoglutarate synthase subunit KorC (187 aa).

In terms of assembly, heterotetramer of the KorA, KorB, KorC and KorD subunits.

The catalysed reaction is 2 oxidized [2Fe-2S]-[ferredoxin] + 2-oxoglutarate + CoA = succinyl-CoA + 2 reduced [2Fe-2S]-[ferredoxin] + CO2 + H(+). The polypeptide is 2-oxoglutarate synthase subunit KorC (korC) (Archaeoglobus fulgidus (strain ATCC 49558 / DSM 4304 / JCM 9628 / NBRC 100126 / VC-16)).